Here is a 587-residue protein sequence, read N- to C-terminus: Pescadillo homolog (587 aa).

The stretch at L267–N306 forms a coiled coil. A disordered region spans residues I290–E311. Residues E295–E311 show a composition bias toward acidic residues. Residues S335 to A434 form the BRCT domain. Positions T437–N587 are disordered. The segment covering K459–D494 has biased composition (acidic residues). A coiled-coil region spans residues E470–N587. 3 stretches are compositionally biased toward basic and acidic residues: residues S529–K541, I559–L569, and K578–N587.

It belongs to the pescadillo family. Component of the NOP7 complex, composed of ERB1, NOP7 and YTM1. The complex is held together by ERB1, which interacts with NOP7 via its N-terminal domain and with YTM1 via a high-affinity interaction between the seven-bladed beta-propeller domains of the 2 proteins. The NOP7 complex associates with the 66S pre-ribosome.

Its subcellular location is the nucleus. The protein resides in the nucleolus. It localises to the nucleoplasm. Functionally, component of the NOP7 complex, which is required for maturation of the 25S and 5.8S ribosomal RNAs and formation of the 60S ribosome. Required for the transition from hyphal to yeast growth. The chain is Pescadillo homolog from Candida albicans (strain SC5314 / ATCC MYA-2876) (Yeast).